A 102-amino-acid polypeptide reads, in one-letter code: MFIKTGDKVRVIAGKDKGKEGTIKKVLASQNRVIVEGVNIVKKHQKPSNSNPNGGVIDTEAAINASNVMLIDPSTNEPTRVGYKFVDGKKVRVAKKSGKTLD.

It belongs to the universal ribosomal protein uL24 family. In terms of assembly, part of the 50S ribosomal subunit.

In terms of biological role, one of two assembly initiator proteins, it binds directly to the 5'-end of the 23S rRNA, where it nucleates assembly of the 50S subunit. One of the proteins that surrounds the polypeptide exit tunnel on the outside of the subunit. The polypeptide is Large ribosomal subunit protein uL24 (Limosilactobacillus reuteri (strain DSM 20016) (Lactobacillus reuteri)).